Consider the following 620-residue polypeptide: Endoglucanase 6 (620 aa).

Positions methionine 1–serine 22 are cleaved as a signal peptide. The Nucleophile role is filled by aspartate 78. Catalysis depends on residues histidine 411, aspartate 463, and glutamate 472. 2 N-linked (GlcNAc...) asparagine glycosylation sites follow: asparagine 554 and asparagine 564.

This sequence belongs to the glycosyl hydrolase 9 (cellulase E) family.

It localises to the secreted. The enzyme catalyses Endohydrolysis of (1-&gt;4)-beta-D-glucosidic linkages in cellulose, lichenin and cereal beta-D-glucans.. In Arabidopsis thaliana (Mouse-ear cress), this protein is Endoglucanase 6.